The chain runs to 122 residues: Large ribosomal subunit protein uL14 (122 aa).

This sequence belongs to the universal ribosomal protein uL14 family. Part of the 50S ribosomal subunit. Forms a cluster with proteins L3 and L19. In the 70S ribosome, L14 and L19 interact and together make contacts with the 16S rRNA in bridges B5 and B8.

In terms of biological role, binds to 23S rRNA. Forms part of two intersubunit bridges in the 70S ribosome. This is Large ribosomal subunit protein uL14 from Acaryochloris marina (strain MBIC 11017).